The following is a 619-amino-acid chain: MRFRHKAAALAATLALPLAGLVGLASPAQAATSATATFAKTSDWGTGFGGSWTVKNTGTTSLSSWTVEWDFPTGTKVTSAWDATVTNSGDHWTAKNVGWNGTLAPGASVSFGFNGSGPGSPSNCKLNGGSCDGTSVPGDAAPSAPGTPTASNITDTSVKLSWSAATDDKGVKNYDVLRDGAKVATVTGTTYTDNGLTKGTAYSYSVKARDTADQTGPASGAVKVTTTGGGDGGNPGTGAEVKMGYFTNWGVYGRNYHVKNLVTSGSADKITHINYAFGNVQGGKCTIGDSYADYDKAYTADQSVDGVADTWDQPLRGNFNQLRKLKAKYPNIKILYSFGGWTWSGGFPDAVKNPAAFAKSCHDLVEDPRWADVFDGIDLDWEYPNACGLSCDETSAPNAFSSMMKAMRAEFGQDYLITAAVTADGSDGGKIDAADYGEASKYIDWYNVMTYDFFGAWAKNGPTAPHSPLTAYDGIPQQGFNTADAMAKFKSKGVPADKLLIGIGFYGRGWTGVTQSAPGGTATGPATGTYEAGIEDYKVLKNSCPATGTIAGTAYAHCGSNWWSYDTPATIKSKMDWAEQQGLGGAFFWEFSGDTANGDWWRHRQRPQVTPAVRTTRRH.

Residues 1–30 form the signal peptide; that stretch reads MRFRHKAAALAATLALPLAGLVGLASPAQA. Residues 31–134 form the CBM2 domain; that stretch reads ATSATATFAK…KLNGGSCDGT (104 aa). Positions 144-229 constitute a Fibronectin type-III domain; sequence APGTPTASNI…GAVKVTTTGG (86 aa). The interval 212 to 236 is disordered; it reads ADQTGPASGAVKVTTTGGGDGGNPG. Positions 227–236 are enriched in gly residues; the sequence is TGGGDGGNPG. Residues 240–619 enclose the GH18 domain; it reads EVKMGYFTNW…TPAVRTTRRH (380 aa). Residues 312–313 and 339–342 each bind chitin; these read DQ and GGWT. The active-site Proton donor is Glu-382. Chitin contacts are provided by residues Tyr-383, 449–452, and Trp-589; that span reads MTYD.

It belongs to the glycosyl hydrolase 18 family. Chitinase class II subfamily.

The enzyme catalyses Random endo-hydrolysis of N-acetyl-beta-D-glucosaminide (1-&gt;4)-beta-linkages in chitin and chitodextrins.. This chain is Chitinase C (chiC), found in Streptomyces lividans.